The sequence spans 232 residues: Phosphatidylserine decarboxylase proenzyme (232 aa).

Ser-190 (schiff-base intermediate with substrate; via pyruvic acid) is an active-site residue. Position 190 is a pyruvic acid (Ser); by autocatalysis (Ser-190).

The protein belongs to the phosphatidylserine decarboxylase family. PSD-A subfamily. In terms of assembly, heterodimer of a large membrane-associated beta subunit and a small pyruvoyl-containing alpha subunit. Pyruvate serves as cofactor. In terms of processing, is synthesized initially as an inactive proenzyme. Formation of the active enzyme involves a self-maturation process in which the active site pyruvoyl group is generated from an internal serine residue via an autocatalytic post-translational modification. Two non-identical subunits are generated from the proenzyme in this reaction, and the pyruvate is formed at the N-terminus of the alpha chain, which is derived from the carboxyl end of the proenzyme. The post-translation cleavage follows an unusual pathway, termed non-hydrolytic serinolysis, in which the side chain hydroxyl group of the serine supplies its oxygen atom to form the C-terminus of the beta chain, while the remainder of the serine residue undergoes an oxidative deamination to produce ammonia and the pyruvoyl prosthetic group on the alpha chain.

It is found in the cell membrane. The enzyme catalyses a 1,2-diacyl-sn-glycero-3-phospho-L-serine + H(+) = a 1,2-diacyl-sn-glycero-3-phosphoethanolamine + CO2. It functions in the pathway phospholipid metabolism; phosphatidylethanolamine biosynthesis; phosphatidylethanolamine from CDP-diacylglycerol: step 2/2. In terms of biological role, catalyzes the formation of phosphatidylethanolamine (PtdEtn) from phosphatidylserine (PtdSer). The protein is Phosphatidylserine decarboxylase proenzyme of Rhizobium leguminosarum bv. trifolii (strain WSM2304).